The sequence spans 143 residues: Putative pre-16S rRNA nuclease (143 aa).

It belongs to the YqgF nuclease family.

It is found in the cytoplasm. In terms of biological role, could be a nuclease involved in processing of the 5'-end of pre-16S rRNA. The protein is Putative pre-16S rRNA nuclease of Lactobacillus gasseri (strain ATCC 33323 / DSM 20243 / BCRC 14619 / CIP 102991 / JCM 1131 / KCTC 3163 / NCIMB 11718 / NCTC 13722 / AM63).